The sequence spans 252 residues: Proteasome subunit alpha type-3 (252 aa).

This sequence belongs to the peptidase T1A family. As to quaternary structure, the 26S proteasome consists of a 20S proteasome core and two 19S regulatory subunits. The 20S proteasome core is composed of 28 subunits that are arranged in four stacked rings, resulting in a barrel-shaped structure. The two end rings are each formed by seven alpha subunits, and the two central rings are each formed by seven beta subunits. The catalytic chamber with the active sites is on the inside of the barrel.

It localises to the cytoplasm. Its subcellular location is the nucleus. Functionally, the proteasome is a multicatalytic proteinase complex which is characterized by its ability to cleave peptides with Arg, Phe, Tyr, Leu, and Glu adjacent to the leaving group at neutral or slightly basic pH. The proteasome has an ATP-dependent proteolytic activity. The protein is Proteasome subunit alpha type-3 of Acanthamoeba castellanii (Amoeba).